The following is a 232-amino-acid chain: 7-cyano-7-deazaguanine synthase (232 aa).

8 to 18 (FSGGQDSTTCL) is a binding site for ATP. Zn(2+)-binding residues include C189, C198, C201, and C204.

Belongs to the QueC family. Requires Zn(2+) as cofactor.

It carries out the reaction 7-carboxy-7-deazaguanine + NH4(+) + ATP = 7-cyano-7-deazaguanine + ADP + phosphate + H2O + H(+). It participates in purine metabolism; 7-cyano-7-deazaguanine biosynthesis. Functionally, catalyzes the ATP-dependent conversion of 7-carboxy-7-deazaguanine (CDG) to 7-cyano-7-deazaguanine (preQ(0)). The chain is 7-cyano-7-deazaguanine synthase from Photorhabdus laumondii subsp. laumondii (strain DSM 15139 / CIP 105565 / TT01) (Photorhabdus luminescens subsp. laumondii).